A 216-amino-acid polypeptide reads, in one-letter code: Probable GTP-binding protein EngB (216 aa).

One can recognise an EngB-type G domain in the interval 26–200; that stretch reads EGIEIAFAGR…RAKLDTWFAP (175 aa). Residues 34 to 41, 61 to 65, 79 to 82, 146 to 149, and 179 to 181 each bind GTP; these read GRSNAGKS, GRTQL, DLPG, TKAD, and YSS. 2 residues coordinate Mg(2+): S41 and T63.

It belongs to the TRAFAC class TrmE-Era-EngA-EngB-Septin-like GTPase superfamily. EngB GTPase family. Mg(2+) is required as a cofactor.

In terms of biological role, necessary for normal cell division and for the maintenance of normal septation. The sequence is that of Probable GTP-binding protein EngB from Vibrio vulnificus (strain CMCP6).